Consider the following 154-residue polypeptide: UPF0756 membrane protein YtwI (154 aa).

Transmembrane regions (helical) follow at residues 8–28 (FLIL…LFAV), 54–74 (WGVT…EIGF), 87–107 (WIAL…LTLL), and 117–137 (LVIG…GPLI).

This sequence belongs to the UPF0756 family.

Its subcellular location is the cell membrane. In Bacillus subtilis (strain 168), this protein is UPF0756 membrane protein YtwI (ytwI).